The chain runs to 570 residues: Protein misato homolog 1 (570 aa).

At S495 the chain carries Phosphoserine.

This sequence belongs to the misato family.

It is found in the mitochondrion outer membrane. The protein localises to the cytoplasm. In terms of biological role, involved in the regulation of mitochondrial distribution and morphology. Required for mitochondrial fusion and mitochondrial network formation. The protein is Protein misato homolog 1 (MSTO1) of Pongo pygmaeus (Bornean orangutan).